A 142-amino-acid chain; its full sequence is HTH-type transcriptional regulator MntR (142 aa).

Residues 1-63 (MPTPSMEDYI…YEKYRGLILT (63 aa)) form the HTH dtxR-type domain. Residues D8, E11, H77, E99, E102, and H103 each coordinate Mn(2+).

The protein belongs to the DtxR/MntR family. In terms of assembly, homodimer.

It is found in the cytoplasm. Its activity is regulated as follows. DNA binding is strongly activated by Mn(2+). Central regulator of manganese homeostasis. In Listeria monocytogenes serotype 4b (strain CLIP80459), this protein is HTH-type transcriptional regulator MntR.